A 452-amino-acid polypeptide reads, in one-letter code: tRNA modification GTPase MnmE (452 aa).

The (6S)-5-formyl-5,6,7,8-tetrahydrofolate site is built by Arg22, Glu79, and Lys119. The region spanning 215–375 (GMKVVIAGRP…LRQHLKQSMG (161 aa)) is the TrmE-type G domain. Asn225 serves as a coordination point for K(+). GTP-binding positions include 225-230 (NAGKSS), 244-250 (TDIAGTT), 269-272 (DTAG), and 333-336 (NKAD). Mg(2+) is bound at residue Ser229. 3 residues coordinate K(+): Thr244, Ile246, and Thr249. Position 250 (Thr250) interacts with Mg(2+). Lys452 is a (6S)-5-formyl-5,6,7,8-tetrahydrofolate binding site.

The protein belongs to the TRAFAC class TrmE-Era-EngA-EngB-Septin-like GTPase superfamily. TrmE GTPase family. In terms of assembly, homodimer. Heterotetramer of two MnmE and two MnmG subunits. K(+) is required as a cofactor.

It is found in the cytoplasm. Exhibits a very high intrinsic GTPase hydrolysis rate. Involved in the addition of a carboxymethylaminomethyl (cmnm) group at the wobble position (U34) of certain tRNAs, forming tRNA-cmnm(5)s(2)U34. The protein is tRNA modification GTPase MnmE of Histophilus somni (strain 2336) (Haemophilus somnus).